Here is a 143-residue protein sequence, read N- to C-terminus: Nucleoside diphosphate kinase (143 aa).

ATP-binding residues include lysine 10, phenylalanine 58, arginine 86, threonine 92, arginine 103, and asparagine 113. Histidine 116 acts as the Pros-phosphohistidine intermediate in catalysis.

It belongs to the NDK family. In terms of assembly, homotetramer. The cofactor is Mg(2+).

Its subcellular location is the cytoplasm. It carries out the reaction a 2'-deoxyribonucleoside 5'-diphosphate + ATP = a 2'-deoxyribonucleoside 5'-triphosphate + ADP. The catalysed reaction is a ribonucleoside 5'-diphosphate + ATP = a ribonucleoside 5'-triphosphate + ADP. Major role in the synthesis of nucleoside triphosphates other than ATP. The ATP gamma phosphate is transferred to the NDP beta phosphate via a ping-pong mechanism, using a phosphorylated active-site intermediate. In Ehrlichia ruminantium (strain Welgevonden), this protein is Nucleoside diphosphate kinase.